The sequence spans 564 residues: DNA ligase (564 aa).

Glu234 contacts ATP. Lys236 acts as the N6-AMP-lysine intermediate in catalysis. Positions 241, 256, 288, and 323 each coordinate ATP. Position 288 (Glu288) interacts with a divalent metal cation. Glu383 contacts a divalent metal cation. Residues Arg399 and Lys403 each coordinate ATP.

Belongs to the ATP-dependent DNA ligase family. A divalent metal cation is required as a cofactor.

It carries out the reaction ATP + (deoxyribonucleotide)n-3'-hydroxyl + 5'-phospho-(deoxyribonucleotide)m = (deoxyribonucleotide)n+m + AMP + diphosphate.. In terms of biological role, DNA ligase that seals nicks in double-stranded DNA during DNA replication, DNA recombination and DNA repair. It is not essential for viral replication and recombination. The chain is DNA ligase (LIG) from Vertebrata (FPV).